We begin with the raw amino-acid sequence, 447 residues long: Serine/threonine-protein phosphatase 2A 55 kDa regulatory subunit B gamma isoform (447 aa).

7 WD repeats span residues 22–61 (TPADIISTVEFNHTGELLATGDKGGRVVIFQREPESKNAP), 87–128 (EIEE…KRPE), 171–209 (GHTYHINSISVNSDCETYMSADDLRINLWHLAITDRSFN), 220–260 (DLTE…LCDK), 279–317 (EIISSVSDVKFSHSGRYMLTRDYLTVKVWDLNMEARPIE), 334–375 (ENDC…DVTL), and 410–446 (DFTKKILHTAWHPAENIIAIAATNNLYIFQDKVNSDM).

Belongs to the phosphatase 2A regulatory subunit B family. In terms of assembly, PP2A consists of a common heterodimeric core enzyme, composed of a 36 kDa catalytic subunit (subunit C) and a 65 kDa constant regulatory subunit (PR65 or subunit A), that associates with a variety of regulatory subunits. Proteins that associate with the core dimer include three families of regulatory subunits B (the R2/B/PR55/B55, R3/B''/PR72/PR130/PR59 and R5/B'/B56 families), the 48 kDa variable regulatory subunit, viral proteins, and cell signaling molecules. Interacts with IER5.

In terms of biological role, the B regulatory subunit might modulate substrate selectivity and catalytic activity, and might also direct the localization of the catalytic enzyme to a particular subcellular compartment. The protein is Serine/threonine-protein phosphatase 2A 55 kDa regulatory subunit B gamma isoform (PPP2R2C) of Macaca fascicularis (Crab-eating macaque).